Consider the following 224-residue polypeptide: Phosphoribosylformylglycinamidine synthase subunit PurQ (224 aa).

Positions 4 to 224 constitute a Glutamine amidotransferase type-1 domain; it reads RIGVITFPGT…YSALDSVLAS (221 aa). The active-site Nucleophile is the cysteine 87. Residues histidine 195 and glutamate 197 contribute to the active site.

In terms of assembly, part of the FGAM synthase complex composed of 1 PurL, 1 PurQ and 2 PurS subunits.

It localises to the cytoplasm. The enzyme catalyses N(2)-formyl-N(1)-(5-phospho-beta-D-ribosyl)glycinamide + L-glutamine + ATP + H2O = 2-formamido-N(1)-(5-O-phospho-beta-D-ribosyl)acetamidine + L-glutamate + ADP + phosphate + H(+). It catalyses the reaction L-glutamine + H2O = L-glutamate + NH4(+). Its pathway is purine metabolism; IMP biosynthesis via de novo pathway; 5-amino-1-(5-phospho-D-ribosyl)imidazole from N(2)-formyl-N(1)-(5-phospho-D-ribosyl)glycinamide: step 1/2. Its function is as follows. Part of the phosphoribosylformylglycinamidine synthase complex involved in the purines biosynthetic pathway. Catalyzes the ATP-dependent conversion of formylglycinamide ribonucleotide (FGAR) and glutamine to yield formylglycinamidine ribonucleotide (FGAM) and glutamate. The FGAM synthase complex is composed of three subunits. PurQ produces an ammonia molecule by converting glutamine to glutamate. PurL transfers the ammonia molecule to FGAR to form FGAM in an ATP-dependent manner. PurS interacts with PurQ and PurL and is thought to assist in the transfer of the ammonia molecule from PurQ to PurL. This is Phosphoribosylformylglycinamidine synthase subunit PurQ from Mycobacterium leprae (strain TN).